Reading from the N-terminus, the 127-residue chain is Anti-adapter protein IraD (127 aa).

The protein belongs to the GpW/Gp25 family. IraD subfamily. Interacts with RssB.

Its subcellular location is the cytoplasm. Its function is as follows. Inhibits RpoS proteolysis by regulating RssB activity, thereby increasing the stability of the sigma stress factor RpoS during oxidative stress. Its effect on RpoS stability is due to its interaction with RssB, which probably blocks the interaction of RssB with RpoS, and the consequent delivery of the RssB-RpoS complex to the ClpXP protein degradation pathway. This chain is Anti-adapter protein IraD, found in Escherichia coli O6:K15:H31 (strain 536 / UPEC).